The following is a 97-amino-acid chain: Sorbitol dehydrogenase (97 aa).

Position 44 (cysteine 44) interacts with Zn(2+). Tyrosine 50 is a binding site for substrate. Positions 69 and 70 each coordinate Zn(2+).

It belongs to the zinc-containing alcohol dehydrogenase family. Homotetramer. It depends on Zn(2+) as a cofactor.

The protein localises to the mitochondrion membrane. It is found in the cell projection. Its subcellular location is the cilium. It localises to the flagellum. It catalyses the reaction xylitol + NAD(+) = D-xylulose + NADH + H(+). The enzyme catalyses L-iditol + NAD(+) = keto-L-sorbose + NADH + H(+). The catalysed reaction is keto-D-fructose + NADH + H(+) = D-sorbitol + NAD(+). Functionally, polyol dehydrogenase that catalyzes the reversible NAD(+)-dependent oxidation of various sugar alcohols. Is active with xylitol, L-iditol and D-sorbitol (D-glucitol) as substrates, leading to the C2-oxidized products D-xylulose, L-sorbose and D-fructose, respectively. Is a key enzyme in the polyol pathway that interconverts glucose and fructose via sorbitol, which constitutes an important alternate route for glucose metabolism. May play a role in sperm motility by using sorbitol as an alternative energy source for sperm motility. The sequence is that of Sorbitol dehydrogenase (SORD) from Sus scrofa (Pig).